Consider the following 262-residue polypeptide: tRNA 4-demethylwyosine(37)-methyltransferase Taw21 (262 aa).

S-adenosyl-L-methionine-binding positions include His108, Phe125, 148 to 149 (DL), and 175 to 176 (DA).

It belongs to the class I-like SAM-binding methyltransferase superfamily. TRM5/TYW2 family.

It localises to the cytoplasm. It catalyses the reaction 4-demethylwyosine(37) in tRNA(Phe) + S-adenosyl-L-methionine = isowyosine(37) in tRNA(Phe) + S-adenosyl-L-homocysteine + H(+). In terms of biological role, catalyzes the C7-methylation of 4-demethylwyosine (imG-14) at position 37 in tRNA(Phe). The protein is tRNA 4-demethylwyosine(37)-methyltransferase Taw21 of Saccharolobus solfataricus (strain ATCC 35092 / DSM 1617 / JCM 11322 / P2) (Sulfolobus solfataricus).